We begin with the raw amino-acid sequence, 476 residues long: Bifunctional protein HldE (476 aa).

Residues 1–318 (MKPVLPDYSK…AEAVHGSKDT (318 aa)) are ribokinase. ATP is bound at residue 195–198 (NMSE). D264 is an active-site residue. Residues 344 to 476 (MTNGCFDILH…IIEAIKGGRG (133 aa)) form a cytidylyltransferase region.

It in the N-terminal section; belongs to the carbohydrate kinase PfkB family. In the C-terminal section; belongs to the cytidylyltransferase family. In terms of assembly, homodimer.

It carries out the reaction D-glycero-beta-D-manno-heptose 7-phosphate + ATP = D-glycero-beta-D-manno-heptose 1,7-bisphosphate + ADP + H(+). It catalyses the reaction D-glycero-beta-D-manno-heptose 1-phosphate + ATP + H(+) = ADP-D-glycero-beta-D-manno-heptose + diphosphate. It participates in nucleotide-sugar biosynthesis; ADP-L-glycero-beta-D-manno-heptose biosynthesis; ADP-L-glycero-beta-D-manno-heptose from D-glycero-beta-D-manno-heptose 7-phosphate: step 1/4. It functions in the pathway nucleotide-sugar biosynthesis; ADP-L-glycero-beta-D-manno-heptose biosynthesis; ADP-L-glycero-beta-D-manno-heptose from D-glycero-beta-D-manno-heptose 7-phosphate: step 3/4. In terms of biological role, catalyzes the phosphorylation of D-glycero-D-manno-heptose 7-phosphate at the C-1 position to selectively form D-glycero-beta-D-manno-heptose-1,7-bisphosphate. Catalyzes the ADP transfer from ATP to D-glycero-beta-D-manno-heptose 1-phosphate, yielding ADP-D-glycero-beta-D-manno-heptose. The chain is Bifunctional protein HldE from Vibrio cholerae serotype O1 (strain M66-2).